An 88-amino-acid polypeptide reads, in one-letter code: Small ribosomal subunit protein bS16c (88 aa).

The protein belongs to the bacterial ribosomal protein bS16 family.

Its subcellular location is the plastid. It is found in the chloroplast. The chain is Small ribosomal subunit protein bS16c from Oenothera elata subsp. hookeri (Hooker's evening primrose).